The primary structure comprises 340 residues: Ketol-acid reductoisomerase (NADP(+)) (340 aa).

Residues 3–183 (VNIYYDKDCD…GGGRTGIIET (181 aa)) enclose the KARI N-terminal Rossmann domain. Residues 26–29 (FGSQ), S54, and 84–87 (DELQ) each bind NADP(+). H109 is an active-site residue. G135 is an NADP(+) binding site. Residues 184–329 (TFKDETETDL…KKLRAMMPWI (146 aa)) form the KARI C-terminal knotted domain. Mg(2+)-binding residues include D192, E196, E228, and E232. A substrate-binding site is contributed by S253.

This sequence belongs to the ketol-acid reductoisomerase family. It depends on Mg(2+) as a cofactor.

It carries out the reaction (2R)-2,3-dihydroxy-3-methylbutanoate + NADP(+) = (2S)-2-acetolactate + NADPH + H(+). The catalysed reaction is (2R,3R)-2,3-dihydroxy-3-methylpentanoate + NADP(+) = (S)-2-ethyl-2-hydroxy-3-oxobutanoate + NADPH + H(+). It functions in the pathway amino-acid biosynthesis; L-isoleucine biosynthesis; L-isoleucine from 2-oxobutanoate: step 2/4. It participates in amino-acid biosynthesis; L-valine biosynthesis; L-valine from pyruvate: step 2/4. In terms of biological role, involved in the biosynthesis of branched-chain amino acids (BCAA). Catalyzes an alkyl-migration followed by a ketol-acid reduction of (S)-2-acetolactate (S2AL) to yield (R)-2,3-dihydroxy-isovalerate. In the isomerase reaction, S2AL is rearranged via a Mg-dependent methyl migration to produce 3-hydroxy-3-methyl-2-ketobutyrate (HMKB). In the reductase reaction, this 2-ketoacid undergoes a metal-dependent reduction by NADPH to yield (R)-2,3-dihydroxy-isovalerate. The polypeptide is Ketol-acid reductoisomerase (NADP(+)) (Campylobacter curvus (strain 525.92)).